Reading from the N-terminus, the 221-residue chain is Pyridoxine/pyridoxamine 5'-phosphate oxidase (221 aa).

Substrate is bound by residues 14–17 and K73; that span reads RNEY. Residues 68-73, 83-84, K90, and Q112 each bind FMN; these read RTVLLK and FT. Positions 130, 134, and 138 each coordinate substrate. FMN is bound by residues 147 to 148 and W193; that span reads QS. A substrate-binding site is contributed by 199–201; that stretch reads RLH. R203 lines the FMN pocket.

Belongs to the pyridoxamine 5'-phosphate oxidase family. In terms of assembly, homodimer. It depends on FMN as a cofactor.

The enzyme catalyses pyridoxamine 5'-phosphate + O2 + H2O = pyridoxal 5'-phosphate + H2O2 + NH4(+). It catalyses the reaction pyridoxine 5'-phosphate + O2 = pyridoxal 5'-phosphate + H2O2. It participates in cofactor metabolism; pyridoxal 5'-phosphate salvage; pyridoxal 5'-phosphate from pyridoxamine 5'-phosphate: step 1/1. It functions in the pathway cofactor metabolism; pyridoxal 5'-phosphate salvage; pyridoxal 5'-phosphate from pyridoxine 5'-phosphate: step 1/1. In terms of biological role, catalyzes the oxidation of either pyridoxine 5'-phosphate (PNP) or pyridoxamine 5'-phosphate (PMP) into pyridoxal 5'-phosphate (PLP). The polypeptide is Pyridoxine/pyridoxamine 5'-phosphate oxidase (Salinispora arenicola (strain CNS-205)).